A 327-amino-acid polypeptide reads, in one-letter code: GPI-linked NAD(P)(+)--arginine ADP-ribosyltransferase 1 (327 aa).

The N-terminal stretch at 1–22 is a signal peptide; sequence MQMPAMMSLLLVSVGLMEALQA. Disulfide bonds link Cys-53–Cys-277 and Cys-174–Cys-224. N-linked (GlcNAc...) asparagine glycosylation is present at Asn-65. Residues 73 to 273 form the TR mART core domain; it reads QVYADSWTLA…IYLRALGKHS (201 aa). Residues Tyr-121 and Arg-179 each coordinate NAD(+). Active-site residues include Arg-179 and Ser-202. Ser-233 provides a ligand contact to NAD(+). Glu-240 is a catalytic residue. A glycan (N-linked (GlcNAc...) asparagine) is linked at Asn-253. A lipid anchor (GPI-anchor amidated serine) is attached at Ser-295. A propeptide spans 296–327 (removed in mature form); that stretch reads AMGQSPLSAVWSLLLLLWFLVVRAFPDGPGLL.

It belongs to the Arg-specific ADP-ribosyltransferase family.

The protein localises to the sarcoplasmic reticulum membrane. The enzyme catalyses L-arginyl-[protein] + NAD(+) = N(omega)-(ADP-D-ribosyl)-L-arginyl-[protein] + nicotinamide + H(+). Has ADP-ribosyltransferase activity toward GLP1R. The polypeptide is GPI-linked NAD(P)(+)--arginine ADP-ribosyltransferase 1 (ART1) (Homo sapiens (Human)).